Here is a 595-residue protein sequence, read N- to C-terminus: MDDRSLKLAEDFVSARYIEAGRESLRATARIMRSILAQRCCPDEGLTDAAIELILRQLSLMDTNNLAHHVGGGEREGRVVSALVRMRHFHLTHGIGRSGDLFSEQPKAAGSSLLYKITNVLMLDLIRQAGAPSTAAAVVVPMATGMTLALVLRCVAKTHMKELMKEAEAVQLQRTVTKDSTSATSAAPVQEPPMSEADRDRHDRTSLPVPATPRYVIWPRIDQKTALKCIDAAGLVPVPVQLRPAVPLARSAAPCVSTNRDSLDRGQDSIGSPSTPTSSSSLFLECHVDDVAAAVNAVGGPSQVVCVLSTTSCFAPRLPDNTVAIAQYCKKAGIPYVVNNAYGVQSRRIMTRLDAAQRLGRVDFVVQSGDKNFLVPVGGSIICSGDKERCKAVAALYAGRASMSPIVDLFITALSLGRRGMQTLWSDRYKCRARLIRQLRVFARERREVLLVDDSDDDKADEDTVGGSQRTSNAVVPRNDISVAVTMRAYGLPAAEASSSGAQLGSEQAGRVTNWAAARALGAQLFRSAVTGPRVITPAPSTPTTIAGCTFRNYGMHQDREPPCPLLVIACGIGMSESEVDALMARLRDLWPVPA.

Residue Arg-75 coordinates pyridoxal 5'-phosphate. The segment at Gly-96 to Pro-106 is phosphate loop (P-loop). Positions 97, 98, and 105 each coordinate substrate. Residues Arg-174–Ala-187 are compositionally biased toward polar residues. Disordered stretches follow at residues Arg-174–Pro-208 and Ser-257–Ser-278. The segment covering Glu-196–Thr-205 has biased composition (basic and acidic residues). Arg-358 lines the tRNA pocket. Lys-371 is subject to N6-(pyridoxal phosphate)lysine. Residue Arg-400 coordinates substrate.

This sequence belongs to the SepSecS family. Homotetramer composed of two homodimers. The cofactor is pyridoxal 5'-phosphate.

It is found in the cytoplasm. It catalyses the reaction O-phospho-L-seryl-tRNA(Sec) + selenophosphate + H2O = L-selenocysteinyl-tRNA(Sec) + 2 phosphate. The protein operates within aminoacyl-tRNA biosynthesis; selenocysteinyl-tRNA(Sec) biosynthesis; selenocysteinyl-tRNA(Sec) from L-seryl-tRNA(Sec) (archaeal/eukaryal route): step 2/2. Its function is as follows. Converts O-phosphoseryl-tRNA(Sec) to selenocysteinyl-tRNA(Sec) required for selenoprotein biosynthesis. This is O-phosphoseryl-tRNA(Sec) selenium transferase from Leishmania donovani.